The primary structure comprises 65 residues: Large ribosomal subunit protein bL35 (65 aa).

Belongs to the bacterial ribosomal protein bL35 family.

This is Large ribosomal subunit protein bL35 from Syntrophobacter fumaroxidans (strain DSM 10017 / MPOB).